A 77-amino-acid polypeptide reads, in one-letter code: Surfactant-associated protein 2 (77 aa).

Positions 1-19 are cleaved as a signal peptide; the sequence is MESLMRLFLLLALLSSSHA. Asparagine 61 carries an N-linked (GlcNAc...) asparagine glycan.

In terms of processing, N-glycosylated. In terms of tissue distribution, expressed in lung, and specifically in alveolar type II epithelial cells.

The protein resides in the secreted. It localises to the cytoplasmic vesicle. Its subcellular location is the secretory vesicle. The protein localises to the golgi apparatus. Putative surfactant protein. The polypeptide is Surfactant-associated protein 2 (Mus musculus (Mouse)).